Reading from the N-terminus, the 512-residue chain is Cobyric acid synthase (512 aa).

One can recognise a GATase cobBQ-type domain in the interval 262-442 (WLRVAAIRLP…WHGLLETDRF (181 aa)). Cysteine 343 acts as the Nucleophile in catalysis. Histidine 434 is an active-site residue.

It belongs to the CobB/CobQ family. CobQ subfamily.

It participates in cofactor biosynthesis; adenosylcobalamin biosynthesis. Its function is as follows. Catalyzes amidations at positions B, D, E, and G on adenosylcobyrinic A,C-diamide. NH(2) groups are provided by glutamine, and one molecule of ATP is hydrogenolyzed for each amidation. This chain is Cobyric acid synthase, found in Rhodococcus jostii (strain RHA1).